A 470-amino-acid polypeptide reads, in one-letter code: Uronate isomerase (470 aa).

The protein belongs to the metallo-dependent hydrolases superfamily. Uronate isomerase family.

It catalyses the reaction D-glucuronate = D-fructuronate. It carries out the reaction aldehydo-D-galacturonate = keto-D-tagaturonate. The protein operates within carbohydrate metabolism; pentose and glucuronate interconversion. This is Uronate isomerase from Salmonella paratyphi A (strain ATCC 9150 / SARB42).